We begin with the raw amino-acid sequence, 385 residues long: Queuine tRNA-ribosyltransferase (385 aa).

Aspartate 92 acts as the Proton acceptor in catalysis. Residues 92 to 96, aspartate 146, glutamine 188, and glycine 215 each bind substrate; that span reads DSGGF. An RNA binding region spans residues 246–252; that stretch reads GVGHPED. Aspartate 265 acts as the Nucleophile in catalysis. An RNA binding; important for wobble base 34 recognition region spans residues 270–274; sequence TRTGR. Positions 303, 305, 308, and 334 each coordinate Zn(2+).

This sequence belongs to the queuine tRNA-ribosyltransferase family. As to quaternary structure, homodimer. Within each dimer, one monomer is responsible for RNA recognition and catalysis, while the other monomer binds to the replacement base PreQ1. Requires Zn(2+) as cofactor.

The catalysed reaction is 7-aminomethyl-7-carbaguanine + guanosine(34) in tRNA = 7-aminomethyl-7-carbaguanosine(34) in tRNA + guanine. It functions in the pathway tRNA modification; tRNA-queuosine biosynthesis. In terms of biological role, catalyzes the base-exchange of a guanine (G) residue with the queuine precursor 7-aminomethyl-7-deazaguanine (PreQ1) at position 34 (anticodon wobble position) in tRNAs with GU(N) anticodons (tRNA-Asp, -Asn, -His and -Tyr). Catalysis occurs through a double-displacement mechanism. The nucleophile active site attacks the C1' of nucleotide 34 to detach the guanine base from the RNA, forming a covalent enzyme-RNA intermediate. The proton acceptor active site deprotonates the incoming PreQ1, allowing a nucleophilic attack on the C1' of the ribose to form the product. After dissociation, two additional enzymatic reactions on the tRNA convert PreQ1 to queuine (Q), resulting in the hypermodified nucleoside queuosine (7-(((4,5-cis-dihydroxy-2-cyclopenten-1-yl)amino)methyl)-7-deazaguanosine). The protein is Queuine tRNA-ribosyltransferase of Thermus thermophilus (strain ATCC 27634 / DSM 579 / HB8).